The sequence spans 312 residues: Glyoxylate/hydroxypyruvate reductase A (312 aa).

Residue Arg227 is part of the active site. His275 functions as the Proton donor in the catalytic mechanism.

It belongs to the D-isomer specific 2-hydroxyacid dehydrogenase family. GhrA subfamily.

It localises to the cytoplasm. It catalyses the reaction glycolate + NADP(+) = glyoxylate + NADPH + H(+). The enzyme catalyses (R)-glycerate + NAD(+) = 3-hydroxypyruvate + NADH + H(+). The catalysed reaction is (R)-glycerate + NADP(+) = 3-hydroxypyruvate + NADPH + H(+). Functionally, catalyzes the NADPH-dependent reduction of glyoxylate and hydroxypyruvate into glycolate and glycerate, respectively. The sequence is that of Glyoxylate/hydroxypyruvate reductase A from Escherichia coli (strain ATCC 8739 / DSM 1576 / NBRC 3972 / NCIMB 8545 / WDCM 00012 / Crooks).